The chain runs to 250 residues: Anamorsin homolog 2 (250 aa).

Residues 1–102 form an N-terminal SAM-like domain region; it reads MNLKITINQQ…QTKKINIPQQ (102 aa). The tract at residues 102–149 is linker; sequence QDFNNCYGKYDYIEQKFQNQINFFKQVDLKGNQETIDENELLNDGVEV. [2Fe-2S] cluster is bound by residues Cys155, Cys162, Cys165, and Cys167. Positions 155–167 are fe-S binding site A; that stretch reads CASKPRACANCTC. [4Fe-4S] cluster contacts are provided by Cys193, Cys196, Cys204, and Cys207. 2 short sequence motifs (cx2C motif) span residues 193–196 and 204–207; these read CGSC and CANC. The tract at residues 193-207 is fe-S binding site B; sequence CGSCYLGDAFRCANC.

This sequence belongs to the anamorsin family. In terms of assembly, monomer. The cofactor is [2Fe-2S] cluster. Requires [4Fe-4S] cluster as cofactor.

The protein localises to the cytoplasm. It localises to the mitochondrion intermembrane space. Functionally, component of the cytosolic iron-sulfur (Fe-S) protein assembly (CIA) machinery. Required for the maturation of extramitochondrial Fe-S proteins. Part of an electron transfer chain functioning in an early step of cytosolic Fe-S biogenesis, facilitating the de novo assembly of a [4Fe-4S] cluster on the cytosolic Fe-S scaffold complex. Electrons are transferred from NADPH via a FAD- and FMN-containing diflavin oxidoreductase. Together with the diflavin oxidoreductase, also required for the assembly of the diferric tyrosyl radical cofactor of ribonucleotide reductase (RNR), probably by providing electrons for reduction during radical cofactor maturation in the catalytic small subunit. The protein is Anamorsin homolog 2 of Paramecium tetraurelia.